We begin with the raw amino-acid sequence, 115 residues long: Large ribosomal subunit protein bL19 (115 aa).

The protein belongs to the bacterial ribosomal protein bL19 family. In terms of assembly, part of the 50S ribosomal subunit.

This protein is located at the 30S-50S ribosomal subunit interface and may play a role in the structure and function of the aminoacyl-tRNA binding site. In Bacillus subtilis (strain 168), this protein is Large ribosomal subunit protein bL19 (rplS).